Here is a 438-residue protein sequence, read N- to C-terminus: Histidine--tRNA ligase (438 aa).

This sequence belongs to the class-II aminoacyl-tRNA synthetase family. In terms of assembly, homodimer.

It is found in the cytoplasm. It carries out the reaction tRNA(His) + L-histidine + ATP = L-histidyl-tRNA(His) + AMP + diphosphate + H(+). The chain is Histidine--tRNA ligase from Aromatoleum aromaticum (strain DSM 19018 / LMG 30748 / EbN1) (Azoarcus sp. (strain EbN1)).